Reading from the N-terminus, the 131-residue chain is Holo-[acyl-carrier-protein] synthase (131 aa).

Residues Asp-8 and Glu-59 each contribute to the Mg(2+) site.

It belongs to the P-Pant transferase superfamily. AcpS family. It depends on Mg(2+) as a cofactor.

It is found in the cytoplasm. It catalyses the reaction apo-[ACP] + CoA = holo-[ACP] + adenosine 3',5'-bisphosphate + H(+). Functionally, transfers the 4'-phosphopantetheine moiety from coenzyme A to a Ser of acyl-carrier-protein. This is Holo-[acyl-carrier-protein] synthase from Rickettsia felis (strain ATCC VR-1525 / URRWXCal2) (Rickettsia azadi).